Reading from the N-terminus, the 266-residue chain is MRLIPLSTAEQVGKWAARHIVNRINAFKPTTDRPFVLGLPTGGTPLTAYKALVEMHKAGEVSFKHVVTFNMDEYVGLPKEHPESYHSFMHRNFFDHVDIPAENINLLNGNAPDIDAECRQYEEKIRSYGKIHLFMGGVGNDGHIAFNEPASSLASRTRIKTLTHDTRVANSRFFDGDVNQVPKYALTVGVGTLLDAEEVMILVLGHQKAQALQAAVEGNVNHMWTISCLQLHPKAVVVCDEPSTMELKVKTLKYFNELEAENIKGL.

Residue D72 is the Proton acceptor; for enolization step of the active site. The active-site For ring-opening step is the D141. H143 (proton acceptor; for ring-opening step) is an active-site residue. E148 serves as the catalytic For ring-opening step.

This sequence belongs to the glucosamine/galactosamine-6-phosphate isomerase family. NagB subfamily. In terms of assembly, homohexamer.

The catalysed reaction is alpha-D-glucosamine 6-phosphate + H2O = beta-D-fructose 6-phosphate + NH4(+). It functions in the pathway amino-sugar metabolism; N-acetylneuraminate degradation; D-fructose 6-phosphate from N-acetylneuraminate: step 5/5. With respect to regulation, allosterically activated by N-acetylglucosamine 6-phosphate (GlcNAc6P). In terms of biological role, catalyzes the reversible isomerization-deamination of glucosamine 6-phosphate (GlcN6P) to form fructose 6-phosphate (Fru6P) and ammonium ion. This Salmonella typhi protein is Glucosamine-6-phosphate deaminase.